Here is a 431-residue protein sequence, read N- to C-terminus: Acyl transferase 8 (431 aa).

His-169 serves as the catalytic Proton acceptor. 3 disordered regions span residues 220 to 247, 260 to 313, and 331 to 400; these read VADA…RAPA, HHAG…DHLR, and GLRV…PPPT. Low complexity predominate over residues 224–234; sequence RGGVRPGVPRP. Positions 264-273 are enriched in gly residues; sequence DGGGGGGGGR. Basic residues-rich tracts occupy residues 297 to 306 and 335 to 380; these read ERRRRRRRGR and GRPR…RRLP. Residues 381–394 are compositionally biased toward basic and acidic residues; it reads QRHDAPRLITERAH.

It belongs to the plant acyltransferase family.

Involved in the incorporation of ferulate into the cell wall. May act as arabinoxylan feruloyl transferase. The sequence is that of Acyl transferase 8 from Oryza sativa subsp. japonica (Rice).